The chain runs to 68 residues: Glu S.griseus protease inhibitor (68 aa).

Ser-1 carries the post-translational modification N-acetylserine. A disulfide bridge links Cys-3 with Cys-48.

The protein belongs to the protease inhibitor I13 (potato type I serine protease inhibitor) family.

In terms of biological role, competitively inhibits Glu S.griseus protease by forming probably a 1:1 complex. BGIA has no inhibitory activity against 2 other acidic amino acid-specific endopeptidases (S.aureus protease V8 and B.subtilis proteinase), chymotrypsin, trypsin, pancreatic elastase, and papain, although subtilisin Carlsberg was strongly inhibited. This Momordica charantia (Bitter gourd) protein is Glu S.griseus protease inhibitor.